Reading from the N-terminus, the 321-residue chain is Serine/threonine-protein phosphatase PP1 (321 aa).

Residues Asp60, His62, Asp88, and Asn120 each contribute to the Mn(2+) site. His121 functions as the Proton donor in the catalytic mechanism. Residues His169 and His244 each coordinate Mn(2+). The interval 298 to 321 (KKLTNDSNGRPLTPPRNKQQKPKK) is disordered.

The protein belongs to the PPP phosphatase family. As to quaternary structure, interacts with dpiA. Mn(2+) is required as a cofactor.

It carries out the reaction O-phospho-L-seryl-[protein] + H2O = L-seryl-[protein] + phosphate. The enzyme catalyses O-phospho-L-threonyl-[protein] + H2O = L-threonyl-[protein] + phosphate. Inhibited by okadaic acid, tautomycin and calyculin A. Inhibited by phosphatase inhibitor 2 (dpiA). Functionally, protein phosphatase activity in vitro. This chain is Serine/threonine-protein phosphatase PP1 (pppB), found in Dictyostelium discoideum (Social amoeba).